The chain runs to 170 residues: Peptide deformylase 1 (170 aa).

Fe cation-binding residues include Cys91 and His133. Residue Glu134 is part of the active site. His137 contributes to the Fe cation binding site.

Belongs to the polypeptide deformylase family. Requires Fe(2+) as cofactor.

The catalysed reaction is N-terminal N-formyl-L-methionyl-[peptide] + H2O = N-terminal L-methionyl-[peptide] + formate. Its function is as follows. Removes the formyl group from the N-terminal Met of newly synthesized proteins. Requires at least a dipeptide for an efficient rate of reaction. N-terminal L-methionine is a prerequisite for activity but the enzyme has broad specificity at other positions. This is Peptide deformylase 1 from Vibrio vulnificus (strain CMCP6).